The primary structure comprises 88 residues: Phosphocarrier protein HPr (88 aa).

Residues 1 to 88 (MAQKTFTVTA…DTMSKEGLGE (88 aa)) form the HPr domain. Serine 12 is modified (phosphoserine). Histidine 15 acts as the Pros-phosphohistidine intermediate in catalysis. Residue serine 46 is modified to Phosphoserine; by HPrK/P.

Belongs to the HPr family.

The protein resides in the cytoplasm. Its activity is regulated as follows. Phosphorylation on Ser-46 inhibits the phosphoryl transfer from enzyme I to HPr. Functionally, general (non sugar-specific) component of the phosphoenolpyruvate-dependent sugar phosphotransferase system (sugar PTS). This major carbohydrate active-transport system catalyzes the phosphorylation of incoming sugar substrates concomitantly with their translocation across the cell membrane. The phosphoryl group from phosphoenolpyruvate (PEP) is transferred to the phosphoryl carrier protein HPr by enzyme I. Phospho-HPr then transfers it to the PTS EIIA domain. Its function is as follows. P-Ser-HPr interacts with the catabolite control protein A (CcpA), forming a complex that binds to DNA at the catabolite response elements cre, operator sites preceding a large number of catabolite-regulated genes. Thus, P-Ser-HPr is a corepressor in carbon catabolite repression (CCR), a mechanism that allows bacteria to coordinate and optimize the utilization of available carbon sources. P-Ser-HPr also plays a role in inducer exclusion, in which it probably interacts with several non-PTS permeases and inhibits their transport activity. The chain is Phosphocarrier protein HPr (ptsH) from Priestia megaterium (Bacillus megaterium).